The chain runs to 103 residues: Histone H4 (103 aa).

Residues 1–14 (MTGRGKGGKGLGKG) are compositionally biased toward gly residues. The segment at 1-20 (MTGRGKGGKGLGKGGAKRHR) is disordered. N6-acetyl-N6-methyllysine; alternate occurs at positions 6 and 13. The DNA-binding element occupies 17-21 (KRHRK).

Belongs to the histone H4 family. The nucleosome is a histone octamer containing two molecules each of H2A, H2B, H3 and H4 assembled in one H3-H4 heterotetramer and two H2A-H2B heterodimers. The octamer wraps approximately 147 bp of DNA.

It localises to the nucleus. The protein resides in the chromosome. Functionally, core component of nucleosome. Nucleosomes wrap and compact DNA into chromatin, limiting DNA accessibility to the cellular machineries which require DNA as a template. Histones thereby play a central role in transcription regulation, DNA repair, DNA replication and chromosomal stability. DNA accessibility is regulated via a complex set of post-translational modifications of histones, also called histone code, and nucleosome remodeling. The protein is Histone H4 of Diadromus pulchellus (Parasitic wasp).